The sequence spans 86 residues: U15-lycotoxin-Ls1a (86 aa).

The signal sequence occupies residues 1–20 (MNSKIFAVLFLLAFLSCVLS). Positions 21–66 (DQYCPKSSITACKKMNIRNDCCKDDDCTGGSWCCATPCGNFCKYPT) constitute a WAP domain. 5 cysteine pairs are disulfide-bonded: Cys-24–Cys-54, Cys-32–Cys-58, Cys-41–Cys-53, Cys-42–Cys-80, and Cys-47–Cys-62.

This sequence belongs to the venom protein 11 family. 01 (wap-1) subfamily. Contains 5 disulfide bonds. Expressed by the venom gland.

It is found in the secreted. Has antibacterial activity. This Lycosa singoriensis (Wolf spider) protein is U15-lycotoxin-Ls1a.